We begin with the raw amino-acid sequence, 100 residues long: NADH-quinone oxidoreductase subunit K 2 (100 aa).

The next 3 membrane-spanning stretches (helical) occupy residues 4–24 (LWWHISLGVALFVIGAAGVLL), 28–48 (ILVVLMSLELLLNSVNINFIA), and 60–80 (IFAIFVIAITAAEVAVALGIL).

The protein belongs to the complex I subunit 4L family. As to quaternary structure, NDH-1 is composed of 14 different subunits. Subunits NuoA, H, J, K, L, M, N constitute the membrane sector of the complex.

The protein localises to the cell inner membrane. The enzyme catalyses a quinone + NADH + 5 H(+)(in) = a quinol + NAD(+) + 4 H(+)(out). NDH-1 shuttles electrons from NADH, via FMN and iron-sulfur (Fe-S) centers, to quinones in the respiratory chain. The immediate electron acceptor for the enzyme in this species is believed to be ubiquinone. Couples the redox reaction to proton translocation (for every two electrons transferred, four hydrogen ions are translocated across the cytoplasmic membrane), and thus conserves the redox energy in a proton gradient. This Sinorhizobium fredii (strain NBRC 101917 / NGR234) protein is NADH-quinone oxidoreductase subunit K 2.